The chain runs to 88 residues: Antitoxin VapB21 (88 aa).

Antitoxin component of a type II toxin-antitoxin (TA) system. This Mycobacterium tuberculosis (strain CDC 1551 / Oshkosh) protein is Antitoxin VapB21 (vapB21).